A 425-amino-acid polypeptide reads, in one-letter code: Serine--tRNA ligase (425 aa).

233 to 235 contributes to the L-serine binding site; it reads TAE. 264-266 serves as a coordination point for ATP; sequence RRE. Glu-287 is an L-serine binding site. 351–354 contacts ATP; sequence EISS. Residue Ser-385 coordinates L-serine.

This sequence belongs to the class-II aminoacyl-tRNA synthetase family. Type-1 seryl-tRNA synthetase subfamily. As to quaternary structure, homodimer. The tRNA molecule binds across the dimer.

The protein resides in the cytoplasm. It catalyses the reaction tRNA(Ser) + L-serine + ATP = L-seryl-tRNA(Ser) + AMP + diphosphate + H(+). The catalysed reaction is tRNA(Sec) + L-serine + ATP = L-seryl-tRNA(Sec) + AMP + diphosphate + H(+). Its pathway is aminoacyl-tRNA biosynthesis; selenocysteinyl-tRNA(Sec) biosynthesis; L-seryl-tRNA(Sec) from L-serine and tRNA(Sec): step 1/1. In terms of biological role, catalyzes the attachment of serine to tRNA(Ser). Is also able to aminoacylate tRNA(Sec) with serine, to form the misacylated tRNA L-seryl-tRNA(Sec), which will be further converted into selenocysteinyl-tRNA(Sec). The polypeptide is Serine--tRNA ligase (Synechococcus sp. (strain CC9902)).